The primary structure comprises 155 residues: Small ribosomal subunit protein uS7cz/uS7cy (155 aa).

Belongs to the universal ribosomal protein uS7 family. In terms of assembly, part of the 30S ribosomal subunit.

Its subcellular location is the plastid. It is found in the chloroplast. In terms of biological role, one of the primary rRNA binding proteins, it binds directly to 16S rRNA where it nucleates assembly of the head domain of the 30S subunit. The polypeptide is Small ribosomal subunit protein uS7cz/uS7cy (rps7-A) (Psilotum nudum (Whisk fern)).